The primary structure comprises 545 residues: La-related protein 6B (545 aa).

Over residues 1-10 (MADQQTLDSS) the composition is skewed to polar residues. Disordered regions lie at residues 1–76 (MADQ…IPPP), 105–187 (LVPV…DSKT), and 382–545 (HQTK…VQAE). Residues 23–49 (SHSTSSTTSASSSSDPSLLRSLSLSRL) are compositionally biased toward low complexity. A compositionally biased stretch (pro residues) spans 61–76 (TTPPLPQPPRMIIPPP). Residues 111–126 (HHPHHRFHQHHHHNRH) show a composition bias toward basic residues. Basic and acidic residues predominate over residues 154 to 173 (LVSKKNDRRDHSKRESKNDQ). The span at 174 to 185 (VTETGASVSIDS) shows a compositional bias: polar residues. One can recognise an HTH La-type RNA-binding domain in the interval 187 to 278 (TGLPEDSIQK…RRISPITESA (92 aa)). The RRM domain maps to 285-383 (RIIVAENLPE…LKVRLMLKHQ (99 aa)). The segment covering 448–464 (GQRKGRNRGRGKGRGRG) has biased composition (basic residues). Positions 465 to 478 (QPHQNQNQNNNHSH) are enriched in low complexity. The segment covering 479–497 (NQNHNHNGRGNHHHHHHHQ) has biased composition (basic residues). Residues 498–509 (VGTQPSNNPMNN) are compositionally biased toward polar residues. Residues 510–519 (MEQPGMGKQQ) show a composition bias toward low complexity.

The protein resides in the nucleus. Functionally, transcriptional regulator. In Arabidopsis thaliana (Mouse-ear cress), this protein is La-related protein 6B (LARP6B).